Here is a 373-residue protein sequence, read N- to C-terminus: Anhydro-N-acetylmuramic acid kinase (373 aa).

Residue 12 to 19 participates in ATP binding; that stretch reads GTSLDGVD.

The protein belongs to the anhydro-N-acetylmuramic acid kinase family.

It catalyses the reaction 1,6-anhydro-N-acetyl-beta-muramate + ATP + H2O = N-acetyl-D-muramate 6-phosphate + ADP + H(+). The protein operates within amino-sugar metabolism; 1,6-anhydro-N-acetylmuramate degradation. Its pathway is cell wall biogenesis; peptidoglycan recycling. Catalyzes the specific phosphorylation of 1,6-anhydro-N-acetylmuramic acid (anhMurNAc) with the simultaneous cleavage of the 1,6-anhydro ring, generating MurNAc-6-P. Is required for the utilization of anhMurNAc either imported from the medium or derived from its own cell wall murein, and thus plays a role in cell wall recycling. This chain is Anhydro-N-acetylmuramic acid kinase, found in Erwinia tasmaniensis (strain DSM 17950 / CFBP 7177 / CIP 109463 / NCPPB 4357 / Et1/99).